The sequence spans 491 residues: Cytochrome P450 2B9 (491 aa).

Phosphoserine; by PKA is present on Ser128. Position 436 (Cys436) interacts with heme.

Belongs to the cytochrome P450 family. Heme serves as cofactor.

It is found in the endoplasmic reticulum membrane. The protein localises to the microsome membrane. The catalysed reaction is an organic molecule + reduced [NADPH--hemoprotein reductase] + O2 = an alcohol + oxidized [NADPH--hemoprotein reductase] + H2O + H(+). Functionally, cytochromes P450 are a group of heme-thiolate monooxygenases. In liver microsomes, this enzyme is involved in an NADPH-dependent electron transport pathway. It oxidizes a variety of structurally unrelated compounds, including steroids, fatty acids, and xenobiotics. This is Cytochrome P450 2B9 (Cyp2b9) from Mus musculus (Mouse).